The primary structure comprises 433 residues: 3-phosphoshikimate 1-carboxyvinyltransferase (433 aa).

Residues Lys-23, Ser-24, and Arg-28 each contribute to the 3-phosphoshikimate site. Lys-23 contributes to the phosphoenolpyruvate binding site. Phosphoenolpyruvate contacts are provided by Gly-95 and Arg-123. Residues Ser-170, Ser-171, Gln-172, Ser-198, Asp-317, and Lys-344 each contribute to the 3-phosphoshikimate site. Gln-172 contacts phosphoenolpyruvate. Asp-317 acts as the Proton acceptor in catalysis. Phosphoenolpyruvate contacts are provided by Arg-348, Arg-391, and Lys-416.

The protein belongs to the EPSP synthase family. In terms of assembly, monomer.

It is found in the cytoplasm. It catalyses the reaction 3-phosphoshikimate + phosphoenolpyruvate = 5-O-(1-carboxyvinyl)-3-phosphoshikimate + phosphate. Its pathway is metabolic intermediate biosynthesis; chorismate biosynthesis; chorismate from D-erythrose 4-phosphate and phosphoenolpyruvate: step 6/7. Catalyzes the transfer of the enolpyruvyl moiety of phosphoenolpyruvate (PEP) to the 5-hydroxyl of shikimate-3-phosphate (S3P) to produce enolpyruvyl shikimate-3-phosphate and inorganic phosphate. The sequence is that of 3-phosphoshikimate 1-carboxyvinyltransferase from Neisseria gonorrhoeae (strain NCCP11945).